The chain runs to 112 residues: T cell receptor alpha variable 12-1 (112 aa).

The N-terminal stretch at 1-20 (MISLRVLLVILWLQLSWVWS) is a signal peptide. Residues 23–112 (KEVEQDPGPF…DSATYLCVVN (90 aa)) form the Ig-like domain. N43 carries an N-linked (GlcNAc...) asparagine glycan. A disulfide bridge connects residues C44 and C109.

As to quaternary structure, alpha-beta TR is a heterodimer composed of an alpha and beta chain; disulfide-linked. The alpha-beta TR is associated with the transmembrane signaling CD3 coreceptor proteins to form the TR-CD3 (TcR or TCR). The assembly of alpha-beta TR heterodimers with CD3 occurs in the endoplasmic reticulum where a single alpha-beta TR heterodimer associates with one CD3D-CD3E heterodimer, one CD3G-CD3E heterodimer and one CD247 homodimer forming a stable octameric structure. CD3D-CD3E and CD3G-CD3E heterodimers preferentially associate with TR alpha and TR beta chains, respectively. The association of the CD247 homodimer is the last step of TcR assembly in the endoplasmic reticulum and is required for transport to the cell surface.

The protein resides in the cell membrane. In terms of biological role, v region of the variable domain of T cell receptor (TR) alpha chain that participates in the antigen recognition. Alpha-beta T cell receptors are antigen specific receptors which are essential to the immune response and are present on the cell surface of T lymphocytes. Recognize peptide-major histocompatibility (MH) (pMH) complexes that are displayed by antigen presenting cells (APC), a prerequisite for efficient T cell adaptive immunity against pathogens. Binding of alpha-beta TR to pMH complex initiates TR-CD3 clustering on the cell surface and intracellular activation of LCK that phosphorylates the ITAM motifs of CD3G, CD3D, CD3E and CD247 enabling the recruitment of ZAP70. In turn ZAP70 phosphorylates LAT, which recruits numerous signaling molecules to form the LAT signalosome. The LAT signalosome propagates signal branching to three major signaling pathways, the calcium, the mitogen-activated protein kinase (MAPK) kinase and the nuclear factor NF-kappa-B (NF-kB) pathways, leading to the mobilization of transcription factors that are critical for gene expression and essential for T cell growth and differentiation. The T cell repertoire is generated in the thymus, by V-(D)-J rearrangement. This repertoire is then shaped by intrathymic selection events to generate a peripheral T cell pool of self-MH restricted, non-autoaggressive T cells. Post-thymic interaction of alpha-beta TR with the pMH complexes shapes TR structural and functional avidity. The protein is T cell receptor alpha variable 12-1 of Homo sapiens (Human).